The primary structure comprises 275 residues: Diaminopimelate epimerase (275 aa).

Substrate is bound by residues Asn12, Gln45, and Asn65. Catalysis depends on Cys74, which acts as the Proton donor. Residues 75 to 76 (GN), Asn158, Asn191, and 209 to 210 (ER) each bind substrate. Cys218 acts as the Proton acceptor in catalysis. 219-220 (GT) contributes to the substrate binding site.

It belongs to the diaminopimelate epimerase family. In terms of assembly, homodimer.

It localises to the cytoplasm. It carries out the reaction (2S,6S)-2,6-diaminopimelate = meso-2,6-diaminopimelate. It participates in amino-acid biosynthesis; L-lysine biosynthesis via DAP pathway; DL-2,6-diaminopimelate from LL-2,6-diaminopimelate: step 1/1. Functionally, catalyzes the stereoinversion of LL-2,6-diaminopimelate (L,L-DAP) to meso-diaminopimelate (meso-DAP), a precursor of L-lysine and an essential component of the bacterial peptidoglycan. The protein is Diaminopimelate epimerase of Shewanella oneidensis (strain ATCC 700550 / JCM 31522 / CIP 106686 / LMG 19005 / NCIMB 14063 / MR-1).